A 920-amino-acid polypeptide reads, in one-letter code: Isoleucine--tRNA ligase (920 aa).

A 'HIGH' region motif is present at residues 58-68 (PYANGHLHLGH). Glu-569 is an L-isoleucyl-5'-AMP binding site. The 'KMSKS' region signature appears at 610–614 (KMSKS). An ATP-binding site is contributed by Lys-613. Residues Cys-895, Cys-898, Cys-910, and Cys-913 each coordinate Zn(2+).

This sequence belongs to the class-I aminoacyl-tRNA synthetase family. IleS type 1 subfamily. As to quaternary structure, monomer. Requires Zn(2+) as cofactor.

It localises to the cytoplasm. It carries out the reaction tRNA(Ile) + L-isoleucine + ATP = L-isoleucyl-tRNA(Ile) + AMP + diphosphate. Functionally, catalyzes the attachment of isoleucine to tRNA(Ile). As IleRS can inadvertently accommodate and process structurally similar amino acids such as valine, to avoid such errors it has two additional distinct tRNA(Ile)-dependent editing activities. One activity is designated as 'pretransfer' editing and involves the hydrolysis of activated Val-AMP. The other activity is designated 'posttransfer' editing and involves deacylation of mischarged Val-tRNA(Ile). The chain is Isoleucine--tRNA ligase from Helicobacter pylori (strain G27).